A 298-amino-acid polypeptide reads, in one-letter code: UDP-N-acetylenolpyruvoylglucosamine reductase (298 aa).

In terms of domain architecture, FAD-binding PCMH-type spans 26 to 191; that stretch reads KTGGPADWLA…LDATFALEPG (166 aa). Arg-170 is a catalytic residue. Ser-220 (proton donor) is an active-site residue. The active site involves Glu-290.

It belongs to the MurB family. FAD serves as cofactor.

The protein resides in the cytoplasm. It carries out the reaction UDP-N-acetyl-alpha-D-muramate + NADP(+) = UDP-N-acetyl-3-O-(1-carboxyvinyl)-alpha-D-glucosamine + NADPH + H(+). It participates in cell wall biogenesis; peptidoglycan biosynthesis. Functionally, cell wall formation. The protein is UDP-N-acetylenolpyruvoylglucosamine reductase of Limosilactobacillus reuteri subsp. reuteri (strain JCM 1112) (Lactobacillus reuteri).